Reading from the N-terminus, the 153-residue chain is Large ribosomal subunit protein uL15 (153 aa).

Residues 1–42 are disordered; it reads MRLNTIKPGMGSTKPRRRVGRGIGSGLGKTCGRGHKGQKSRA. The span at 21-31 shows a compositional bias: gly residues; the sequence is RGIGSGLGKTC.

It belongs to the universal ribosomal protein uL15 family. As to quaternary structure, part of the 50S ribosomal subunit.

Functionally, binds to the 23S rRNA. The sequence is that of Large ribosomal subunit protein uL15 from Nitrosomonas eutropha (strain DSM 101675 / C91 / Nm57).